A 579-amino-acid chain; its full sequence is UvrABC system protein C (579 aa).

Positions 12–89 constitute a GIY-YIG domain; it reads DATGVYIFRD…IKRYRPPYNV (78 aa). A UVR domain is found at 193–228; sequence QEVIEVLEEEMKEASERLEFERAARIRDQIESIREV.

It belongs to the UvrC family. In terms of assembly, interacts with UvrB in an incision complex.

The protein resides in the cytoplasm. The UvrABC repair system catalyzes the recognition and processing of DNA lesions. UvrC both incises the 5' and 3' sides of the lesion. The N-terminal half is responsible for the 3' incision and the C-terminal half is responsible for the 5' incision. This chain is UvrABC system protein C, found in Methanothermobacter thermautotrophicus (strain ATCC 29096 / DSM 1053 / JCM 10044 / NBRC 100330 / Delta H) (Methanobacterium thermoautotrophicum).